Here is a 297-residue protein sequence, read N- to C-terminus: MLNVTHQLKKKLFLSDLDEKSSSSPHDEKKPGDGREVREEKSKRKALPALPSPAEEKSMNLSIARQRSPSGSSPEQVKAYGPFFLEYTLMAEYNQLRSQRLPGVYVLPAAKSALVWYGVIFIRMGLYQDGIFKFQMTIPENFPDGDCPTLVFKPTIFHPVVNIETGELDVRRAFPRWRRNINHLWQVLLYAKRIFYKIDSRDPLNPEAAEMYQNDKDRYKQKVNECLRRCHNELHLAVADDPHAIKFVELTPEKQDDVKNQIIESQSKPECLPTANAHKSGLSWMKKGGAIFSKEES.

A disordered region spans residues 13-75 (FLSDLDEKSS…QRSPSGSSPE (63 aa)). Positions 17-42 (LDEKSSSSPHDEKKPGDGREVREEKS) are enriched in basic and acidic residues. Polar residues predominate over residues 59-75 (MNLSIARQRSPSGSSPE). The UBC core domain occupies 84-232 (FLEYTLMAEY…VNECLRRCHN (149 aa)).

It belongs to the ubiquitin-conjugating enzyme family. FTS subfamily.

The chain is Protein AKTIP homolog from Nematostella vectensis (Starlet sea anemone).